The following is a 466-amino-acid chain: Chromosomal replication initiator protein DnaA (466 aa).

Residues 1–85 form a domain I, interacts with DnaA modulators region; the sequence is MSLSLWQHCL…FEVGNKPVSA (85 aa). Positions 82 to 122 are disordered; sequence PVSARTTESVPKTVTHPAVNSTPTNSQPVRPSWDNQPQSQL. Polar residues predominate over residues 85–122; the sequence is ARTTESVPKTVTHPAVNSTPTNSQPVRPSWDNQPQSQL. Residues 85–129 form a domain II region; it reads ARTTESVPKTVTHPAVNSTPTNSQPVRPSWDNQPQSQLPELNYRS. Residues 130 to 346 form a domain III, AAA+ region region; sequence NVNPKHKFDN…GALNRVIANA (217 aa). ATP contacts are provided by Gly174, Gly176, Lys177, and Thr178. A domain IV, binds dsDNA region spans residues 347–466; sequence NFTGRAITID…FSNLIRTLSS (120 aa).

This sequence belongs to the DnaA family. In terms of assembly, oligomerizes as a right-handed, spiral filament on DNA at oriC.

The protein localises to the cytoplasm. Plays an essential role in the initiation and regulation of chromosomal replication. ATP-DnaA binds to the origin of replication (oriC) to initiate formation of the DNA replication initiation complex once per cell cycle. Binds the DnaA box (a 9 base pair repeat at the origin) and separates the double-stranded (ds)DNA. Forms a right-handed helical filament on oriC DNA; dsDNA binds to the exterior of the filament while single-stranded (ss)DNA is stabiized in the filament's interior. The ATP-DnaA-oriC complex binds and stabilizes one strand of the AT-rich DNA unwinding element (DUE), permitting loading of DNA polymerase. After initiation quickly degrades to an ADP-DnaA complex that is not apt for DNA replication. Binds acidic phospholipids. This chain is Chromosomal replication initiator protein DnaA, found in Proteus mirabilis (strain HI4320).